The primary structure comprises 365 residues: Histidinol-phosphate aminotransferase (365 aa).

Lys-220 carries the post-translational modification N6-(pyridoxal phosphate)lysine.

It belongs to the class-II pyridoxal-phosphate-dependent aminotransferase family. Histidinol-phosphate aminotransferase subfamily. Homodimer. Requires pyridoxal 5'-phosphate as cofactor.

It carries out the reaction L-histidinol phosphate + 2-oxoglutarate = 3-(imidazol-4-yl)-2-oxopropyl phosphate + L-glutamate. It functions in the pathway amino-acid biosynthesis; L-histidine biosynthesis; L-histidine from 5-phospho-alpha-D-ribose 1-diphosphate: step 7/9. The polypeptide is Histidinol-phosphate aminotransferase (Neisseria meningitidis serogroup B (strain ATCC BAA-335 / MC58)).